Consider the following 423-residue polypeptide: MTDDKAVPRTDYKLESDSELRFEIENKNEKVTVVLLNGQAELFGTELVVKKPYEFVTGAKVAIFTYHGCTIELRGKPDVAYVAKETPMVMYLNANSALEHLRNKAEQEDAQGPIVMVVGPTDVGKTTLCRIFLNYAVRLGRRPIFVDLDVGQGGIAIPGTIGALLVERPAPVAEGFSQQAPLVYHYGHSTPSANSTFYDVLISKLAETTLERLQANKKAKSSGMIINTCGWVKGSGYSHILHTVEAFEVTAIFVLDQERLYNELLRDVKGTVQVVFLPKSGGVVERTKSQRTEARDQRIREYFYGSKMPLFPHSFDVKFSDIKIFKVGSPPLPDSCLPLGMKAEDNYTKLVAVQPGPQLLHHILAVSFAESTDENVIQTNVAGFICVTNVNMDKQVLTVLSPQPRPLPQTILLVSDLQFMDSH.

Residues E19, K60, and 122 to 127 (DVGKTT) contribute to the ATP site.

Belongs to the Clp1 family. Clp1 subfamily.

It is found in the nucleus. Its function is as follows. Required for endonucleolytic cleavage during polyadenylation-dependent pre-mRNA 3'-end formation. The polypeptide is Protein CLP1 homolog (cbc) (Anopheles gambiae (African malaria mosquito)).